The following is a 315-amino-acid chain: Homoserine kinase (315 aa).

Residue Pro-97 to Thr-107 coordinates ATP.

It belongs to the GHMP kinase family. Homoserine kinase subfamily.

It localises to the cytoplasm. The enzyme catalyses L-homoserine + ATP = O-phospho-L-homoserine + ADP + H(+). It functions in the pathway amino-acid biosynthesis; L-threonine biosynthesis; L-threonine from L-aspartate: step 4/5. Its function is as follows. Catalyzes the ATP-dependent phosphorylation of L-homoserine to L-homoserine phosphate. This chain is Homoserine kinase, found in Synechococcus sp. (strain CC9605).